Here is a 253-residue protein sequence, read N- to C-terminus: uncharacterized protein (253 aa).

2 consecutive EamA domains span residues 1–97 (MFFM…IYSL) and 116–237 (FFWA…ISRL). Transmembrane regions (helical) follow at residues 2-22 (FFMA…AKQL), 28-48 (IFLL…GLLY), 53-73 (ESAV…TLIL), 80-100 (TEVI…LNLG), 101-121 (IYFS…WALF), 138-158 (AVQL…QFYF), 162-182 (INFL…SFYL), and 214-234 (GVNV…GILI).

This sequence belongs to the EamA transporter family.

It localises to the cell membrane. This is an uncharacterized protein from Acidianus ambivalens (Desulfurolobus ambivalens).